The primary structure comprises 2221 residues: Voltage-dependent L-type calcium channel subunit alpha-1C (2221 aa).

A disordered region spans residues 1 to 20 (MVNENTRMYIPEENHQGSNY). Over 1 to 124 (MVNENTRMYI…RACISIVEWK (124 aa)) the chain is Cytoplasmic. The calmodulin-binding stretch occupies residues 47–68 (GAALSWQAAIDAARQAKLMGSA). The segment at 73–98 (ISTVSSTQRKRQQYGKPKKQGSTTAT) is disordered. The span at 80 to 91 (QRKRQQYGKPKK) shows a compositional bias: basic residues. An I repeat occupies 111-408 (NPIRRACISI…LVLGVLSGEF (298 aa)). A helical membrane pass occupies residues 125-143 (PFEIIILLTIFANCVALAI). Topologically, residues 144–158 (YIPFPEDDSNATNSN) are extracellular. A glycan (N-linked (GlcNAc...) asparagine) is linked at N153. Residues 159-179 (LERVEYLFLIIFTVEAFLKVI) form a helical membrane-spanning segment. Residues 180-188 (AYGLLFHPN) are Cytoplasmic-facing. A helical transmembrane segment spans residues 189-209 (AYLRNGWNLLDFIIVVVGLFS). At 210–232 (AILEQATKADGANALGGKGAGFD) the chain is on the extracellular side. The chain crosses the membrane as a helical span at residues 233 to 251 (VKALRAFRVLRPLRLVSGV). Residues 252-268 (PSLQVVLNSIIKAMVPL) are Cytoplasmic-facing. A helical transmembrane segment spans residues 269–290 (LHIALLVLFVIIIYAIIGLELF). Residues 291 to 350 (MGKMHKTCYNQEGIADVPAEDDPSPCALETGHGRQCQNGTVCKPGWDGPKHGITNFDNFA) lie on the Extracellular side of the membrane. 2 cysteine pairs are disulfide-bonded: C298–C326 and C316–C332. A glycan (N-linked (GlcNAc...) asparagine) is linked at N328. Positions 351–372 (FAMLTVFQCITMEGWTDVLYWV) form an intramembrane region, pore-forming. The Selectivity filter of repeat I signature appears at 361–364 (TMEG). E363 serves as a coordination point for Ca(2+). The Extracellular segment spans residues 373-380 (NDAVGRDW). A helical transmembrane segment spans residues 381-401 (PWIYFVTLIIIGSFFVLNLVL). The Cytoplasmic portion of the chain corresponds to 402–524 (GVLSGEFSKE…RKCRAAVKSN (123 aa)). The tract at residues 428–445 (QQLEEDLKGYLDWITQAE) is AID/alpha-interaction domain; mediates interaction with the beta subunit. The segment at 449–481 (PENEDEGMDEEKPRNMSMPTSETESVNTENVAG) is disordered. The span at 465-478 (SMPTSETESVNTEN) shows a compositional bias: polar residues. The residue at position 469 (S469) is a Phosphoserine. T476 is modified (phosphothreonine). The II repeat unit spans residues 510 to 756 (NRFCRRKCRA…VFLAIAVDNL (247 aa)). The chain crosses the membrane as a helical span at residues 525–543 (VFYWLVIFLVFLNTLTIAS). Residues 544-554 (EHYNQPNWLTE) are Extracellular-facing. A helical transmembrane segment spans residues 555 to 575 (VQDTANKALLALFTAEMLLKM). At 576 to 586 (YSLGLQAYFVS) the chain is on the cytoplasmic side. Residues 587–606 (LFNRFDCFVVCGGILETILV) form a helical membrane-spanning segment. Over 607–615 (ETKIMSPLG) the chain is Extracellular. Residues 616–634 (ISVLRCVRLLRIFKITRYW) form a helical membrane-spanning segment. Topologically, residues 635 to 653 (NSLSNLVASLLNSVRSIAS) are cytoplasmic. A helical transmembrane segment spans residues 654–673 (LLLLLFLFIIIFSLLGMQLF). The Extracellular segment spans residues 674–693 (GGKFNFDEMQTRRSTFDNFP). Positions 694–715 (QSLLTVFQILTGEDWNSVMYDG) form an intramembrane region, pore-forming. The Selectivity filter of repeat II signature appears at 704 to 707 (TGED). E706 is a binding site for Ca(2+). The Extracellular portion of the chain corresponds to 716–725 (IMAYGGPSFP). The chain crosses the membrane as a helical span at residues 726-745 (GMLVCIYFIILFICGNYILL). Over 746–900 (NVFLAIAVDN…LQCHRIVNDT (155 aa)) the chain is Cytoplasmic. The segment at 764 to 861 (SAQKEEEEEK…EMPVGPRPRP (98 aa)) is disordered. The span at 783–792 (SPEKKQELVE) shows a compositional bias: basic and acidic residues. 2 positions are modified to phosphoserine: S808 and S815. The interaction with STAC2 stretch occupies residues 829–876 (NENEDKSPYPNPETTGEEDEEEPEMPVGPRPRPLSELHLKEKAVPMPE). Positions 843–852 (TGEEDEEEPE) are enriched in acidic residues. The III repeat unit spans residues 887 to 1189 (NRFRLQCHRI…IFVGFVIVTF (303 aa)). A helical transmembrane segment spans residues 901-919 (IFTNLILFFILLSSISLAA). Topologically, residues 920–931 (EDPVQHTSFRNH) are extracellular. Residues 932–952 (ILFYFDIVFTTIFTIEIALKI) form a helical membrane-spanning segment. Topologically, residues 953 to 987 (LGNADYVFTSIFTLEIILKMTAYGAFLHKGSFCRN) are cytoplasmic. The helical transmembrane segment at 988–1006 (YFNILDLLVVSVSLISFGI) threads the bilayer. At 1007–1013 (QSSAINV) the chain is on the extracellular side. Residues 1014-1032 (VKILRVLRVLRPLRAINRA) form a helical membrane-spanning segment. Over 1033–1051 (KGLKHVVQCVFVAIRTIGN) the chain is Cytoplasmic. The chain crosses the membrane as a helical span at residues 1052-1071 (IVIVTTLLQFMFACIGVQLF). Residues 1072 to 1121 (KGKLYTCSDSSKQTEAECKGNYITYKDGEVDHPIIQPRSWENSKFDFDNV) are Extracellular-facing. C1078 and C1089 are disulfide-bonded. The tract at residues 1109-1198 (RSWENSKFDF…FQEQGEQEYK (90 aa)) is dihydropyridine binding. Residues 1122–1142 (LAAMMALFTVSTFEGWPELLY) constitute an intramembrane region (pore-forming). The short motif at 1133-1136 (TFEG) is the Selectivity filter of repeat III element. E1135 serves as a coordination point for Ca(2+). Residues 1143-1159 (RSIDSHTEDKGPIYNYR) lie on the Extracellular side of the membrane. A helical transmembrane segment spans residues 1160 to 1181 (VEISIFFIIYIIIIAFFMMNIF). The Cytoplasmic segment spans residues 1182–1239 (VGFVIVTFQEQGEQEYKNCELDKNQRQCVEYALKARPLRRYIPKNQHQYKVWYVVNST). The stretch at 1226-1527 (NQHQYKVWYV…LFVAVIMDNF (302 aa)) is one IV repeat. A helical membrane pass occupies residues 1240-1261 (YFEYLMFVLILLNTICLAMQHY). Residues 1262-1269 (GQSCLFKI) are Extracellular-facing. A helical membrane pass occupies residues 1270–1291 (AMNILNMLFTGLFTVEMILKLI). Topologically, residues 1292–1301 (AFKPKGYFSD) are cytoplasmic. The helical transmembrane segment at 1302–1321 (PWNVFDFLIVIGSIIDVILS) threads the bilayer. The Extracellular portion of the chain corresponds to 1322–1372 (ETNHYFCDAWNTFDALIVVGSIVDIAITEVNPAEHTQCSPSMNAEENSRIS). A helical membrane pass occupies residues 1373–1391 (ITFFRLFRVMRLVKLLSRG). Residues 1392-1409 (EGIRTLLWTFIKSFQALP) lie on the Cytoplasmic side of the membrane. Residues 1410–1430 (YVALLIVMLFFIYAVIGMQVF) traverse the membrane as a helical segment. Over 1431–1452 (GKIALNDTTEINRNNNFQTFPQ) the chain is Extracellular. Residue N1436 is glycosylated (N-linked (GlcNAc...) asparagine). Positions 1453–1471 (AVLLLFRCATGEAWQDIML) form an intramembrane region, pore-forming. The Selectivity filter of repeat IV signature appears at 1462 to 1465 (TGEA). The Extracellular portion of the chain corresponds to 1472-1499 (ACMPGKKCAPESEPSNSTEGETPCGSSF). Residues 1478-1546 (KCAPESEPSN…LGPHHLDEFK (69 aa)) form a dihydropyridine binding region. An intrachain disulfide couples C1479 to C1495. A glycan (N-linked (GlcNAc...) asparagine) is linked at N1487. The segment at 1492 to 1534 (ETPCGSSFAVFYFISFYMLCAFLIINLFVAVIMDNFDYLTRDW) is phenylalkylamine binding. A helical membrane pass occupies residues 1500–1524 (AVFYFISFYMLCAFLIINLFVAVIM). Over 1525-2221 (DNFDYLTRDW…QDSRVYVSSL (697 aa)) the chain is Cytoplasmic. The segment at 1659 to 1686 (DEVTVGKFYATFLIQEYFRKFKKRKEQG) is important for interaction with STAC1, STAC2 and STAC3. A calmodulin-binding IQ region region spans residues 1665–1685 (KFYATFLIQEYFRKFKKRKEQ). Positions 1699–1718 (LQAGLRTLHDIGPEIRRAIS) are important for localization in at the junctional membrane. S1718 and S1739 each carry phosphoserine. Positions 1778–1847 (INKAGSSQGD…TVEGHGPPLS (70 aa)) are disordered. The segment covering 1799-1811 (STFTPSSYSSTGS) has biased composition (polar residues). Positions 1812 to 1822 (NANINNANNTA) are enriched in low complexity. S1981 is subject to Phosphoserine; by PKA. Disordered regions lie at residues 2029-2063 (ASFP…VESS) and 2186-2221 (AGQD…VSSL).

The protein belongs to the calcium channel alpha-1 subunit (TC 1.A.1.11) family. CACNA1C subfamily. In terms of assembly, component of a calcium channel complex consisting of a pore-forming alpha subunit (CACNA1C) and ancillary beta, gamma and delta subunits. The channel complex contains alpha, beta, gamma and delta subunits in a 1:1:1:1 ratio, i.e. it contains only one of each type of subunit. CACNA1C channel activity is modulated by ancillary subunits, such as CACNB1, CACNB2, CACNB3, CACNA2D1 and CACNA2D4. Interacts with the gamma subunits CACNG4, CACNG6, CACNG7 and CACNG8. Interacts with CACNB1. Interacts with CACNB2. Identified in a complex with CACNA2D4 and CACNB3. Interacts with CACNB3. Interacts with CACNA2D1. Interacts with CACNA2D4. Interacts with CALM1. Interacts (via the N-terminus and the C-terminal C and IQ motifs) with CABP1; this inhibits Ca(2+)-dependent channel inactivation. The binding via the C motif is calcium independent whereas the binding via IQ requires the presence of calcium and is mutually exclusive with calmodulin binding. The binding to the cytoplasmic N-terminal domain is calcium independent but is essential for the channel modulation. Interacts (via C-terminal CDB motif) with CABP5; in a calcium-dependent manner. Interacts with CIB1; the interaction increases upon cardiomyocytes hypertrophy. Interacts with STAC2 and STAC3; this inhibits channel inactivation. As to quaternary structure, (Microbial infection) Interacts with influenzavirus H1 hemagglutinin. Phosphorylation by PKA at Ser-1981 activates the channel. Elevated levels of blood glucose lead to increased phosphorylation by PKA. Detected throughout the brain, including hippocampus, cerebellum and amygdala, throughout the heart and vascular system, including ductus arteriosus, in urinary bladder, and in retina and sclera in the eye. Expressed in brain, heart, jejunum, ovary, pancreatic beta-cells and vascular smooth muscle. Overall expression is reduced in atherosclerotic vascular smooth muscle.

It localises to the cell membrane. The protein resides in the sarcolemma. It is found in the perikaryon. Its subcellular location is the postsynaptic density membrane. The protein localises to the cell projection. It localises to the dendrite. The protein resides in the T-tubule. The enzyme catalyses Ca(2+)(in) = Ca(2+)(out). Its activity is regulated as follows. Inhibited by dihydropyridines (DHP), such as isradipine. Inhibited by nifedipine. Channel activity is regulated by Ca(2+) and calmodulin. Binding of STAC1, STAC2 or STAC3 to a region that overlaps with the calmodulin binding site inhibits channel inactivation by Ca(2+) and calmodulin. Binding of calmodulin or CABP1 at the same regulatory sites results in opposite effects on the channel function. Shear stress and pressure increases calcium channel activity. Functionally, pore-forming, alpha-1C subunit of the voltage-gated calcium channel that gives rise to L-type calcium currents. Mediates influx of calcium ions into the cytoplasm, and thereby triggers calcium release from the sarcoplasm. Plays an important role in excitation-contraction coupling in the heart. Required for normal heart development and normal regulation of heart rhythm. Required for normal contraction of smooth muscle cells in blood vessels and in the intestine. Essential for normal blood pressure regulation via its role in the contraction of arterial smooth muscle cells. Long-lasting (L-type) calcium channels belong to the 'high-voltage activated' (HVA) group. In terms of biological role, pore-forming, alpha-1C subunit of the voltage-gated calcium channel that gives rise to L-type calcium currents. Its function is as follows. (Microbial infection) Acts as a receptor for Influenzavirus. May play a critical role in allowing virus entry when sialylated and expressed on lung tissues. In Homo sapiens (Human), this protein is Voltage-dependent L-type calcium channel subunit alpha-1C (CACNA1C).